A 127-amino-acid polypeptide reads, in one-letter code: Cyclin-dependent kinase 2-associated protein 2 (127 aa).

The interval 1–47 (MSYKPIAPAPSSTPGSSTPGPGTPVPTAGSVPSPSGSVPGAAAPFRP) is disordered. Low complexity predominate over residues 9–44 (APSSTPGSSTPGPGTPVPTAGSVPSPSGSVPGAAAP). The interval 65 to 107 (PPGSQGSQSTYTDLLSVIEEMGKEIRPTYAGSKSAMERLKRGI) is interaction with CDK2.

The protein belongs to the CDK2AP family. In terms of assembly, component of the nucleosome remodeling and deacetylase (NuRD) repressor complex, composed of core proteins MTA1, MTA2, MTA3, RBBP4, RBBP7, HDAC1, HDAC2, MBD2, MBD3, and peripherally associated proteins CDK2AP1, CDK2AP2, GATAD2A, GATAD2B, CHD3, CHD4 and CHD5. The exact stoichiometry of the NuRD complex is unknown, and some subunits such as MBD2 and MBD3, GATAD2A and GATAD2B, and CHD3, CHD4 and CHD5 define mutually exclusive NuRD complexes. Interacts with CDK2AP1. Interacts with CDK2. Interacts with MAPK1. In terms of processing, phosphorylated by MAPK1 and CDK2. In terms of tissue distribution, oocytes (at protein level).

It is found in the cytoplasm. The protein resides in the nucleus. In terms of biological role, acts as a component of the histone deacetylase NuRD complex which participates in the remodeling of chromatin. Inhibits cell cycle G1/S phase transition by repressing CDK2 expression and activation; represses CDK2 activation by inhibiting its interaction with cyclin E and A. Plays a role in regulating the self-renewal of embryonic stem cells (ESCs) and in maintaining cell survival during terminal differentiation of ESCs. Regulates microtubule organization of metaphase II oocytes. This chain is Cyclin-dependent kinase 2-associated protein 2 (Cdk2ap2), found in Mus musculus (Mouse).